A 548-amino-acid polypeptide reads, in one-letter code: Chaperonin GroEL (548 aa).

ATP contacts are provided by residues 29–32 (TLGP), K50, 86–90 (DGTTT), G414, 478–480 (NAA), and D494.

This sequence belongs to the chaperonin (HSP60) family. In terms of assembly, forms a cylinder of 14 subunits composed of two heptameric rings stacked back-to-back. Interacts with the co-chaperonin GroES.

Its subcellular location is the cytoplasm. It carries out the reaction ATP + H2O + a folded polypeptide = ADP + phosphate + an unfolded polypeptide.. In terms of biological role, together with its co-chaperonin GroES, plays an essential role in assisting protein folding. The GroEL-GroES system forms a nano-cage that allows encapsulation of the non-native substrate proteins and provides a physical environment optimized to promote and accelerate protein folding. The sequence is that of Chaperonin GroEL from Psychrobacter sp. (strain PRwf-1).